Here is a 2507-residue protein sequence, read N- to C-terminus: Highly reducing polyketide synthase lcsB (2507 aa).

In terms of domain architecture, Ketosynthase family 3 (KS3) spans 2-393 (AEPIAVVGMA…GVNAHVIVES (392 aa)). The disordered stretch occupies residues 399-501 (NHDRGLSNGS…RNGYSGDDVE (103 aa)). Polar residues-rich tracts occupy residues 405–414 (SNGSTTSSSP) and 470–488 (NDTP…TSHT). Residues 581 to 900 (WVFTGQGAQW…DESLLQLAGK (320 aa)) form a malonyl-CoA:ACP transacylase (MAT) domain region. The tract at residues 953–1080 (HELLGSRVTE…GEARASVDKA (128 aa)) is N-terminal hotdog fold. The tract at residues 953–1232 (HELLGSRVTE…FKASALTRSD (280 aa)) is dehydratase (DH) domain. A PKS/mFAS DH domain is found at 953-1234 (HELLGSRVTE…ASALTRSDDE (282 aa)). His-984 serves as the catalytic Proton acceptor; for dehydratase activity. Residues 1092–1234 (ARTVDANEWY…ASALTRSDDE (143 aa)) form a C-terminal hotdog fold region. Asp-1151 acts as the Proton donor; for dehydratase activity in catalysis. Positions 1402–1570 (LGHTNPRLRI…EMVAAGFAEP (169 aa)) are methyltransferase (CMet) domain. The enoyl reductase (ER) (ER) domain stretch occupies residues 1793 to 2105 (GLLHTMGWSQ…GGRHIGKIIV (313 aa)). The tract at residues 2130 to 2303 (SYLLVGGLGG…ASVIDIGVMG (174 aa)) is ketoreductase (KR) domain. The Carrier domain maps to 2425-2503 (EESTVIIATA…SLGDYIRTAL (79 aa)). O-(pantetheine 4'-phosphoryl)serine is present on Ser-2463.

It functions in the pathway secondary metabolite biosynthesis. Its function is as follows. Highly reducing polyketide synthase; part of the gene cluster that mediates the biosynthesis of the lipopeptide antibiotics leucinostatins that show extensive biological activities, including antimalarial, antiviral, antibacterial, antifungal, and antitumor activities, as well as phytotoxic. Leucinostatin A contains nine amino acid residues, including the unusual amino acid 4-methyl-L-proline (MePro), 2-amino-6-hydroxy-4-methyl-8-oxodecanoic acid (AHyMeOA), 3-hydroxyleucine (HyLeu), alpha-aminoisobutyric acid (AIB), beta-Ala, a 4-methylhex-2-enoic acid at the N-terminus as well as a N1,N1-dimethylpropane-1,2-diamine (DPD) at the C-terminus. The biosynthesis of leucinostatins is probably initiated with the assembly of 4-methylhex-2-enoic acid by a reducing PKS. Two reducing polyketide synthases, lcsB and lcsC, have been identified in the cluster and it is not clear which is the one that assembles 4-methylhex-2-enoic acid since both contain KS, AT, DH, cMT, ER, KR and ACP domains. The polyketide residue might be transferred to the NRPS lcsA, mediated by two additional enzymes, the acyl-CoA ligase lcsD and the thioesterase lcsE. The linear polyketide carboxylic acid, which is released from PKS, is converted to a CoA thioester by lcsD, and then lcsE hydrolyzes the thiol bond and shuttles the polyketide intermediate to lcsA. The C domain of the first module catalyzed the condensation of 4-methylhex-2-enoic acid and MePro carried by domain A1, followed by successive condensations of nine amino acids to trigger the elongation of the linear peptide. A5 and A6 domains of lcsA are proposed to incorporate leucine, A2 AHyMeOA, and A3 incorporates HyLeu. A4, A7 and A8 incorporate AIB. The AHyMeOA in leucinostatin A activated by the A2 might be produced by the second PKS (lcsB or lcsC) present within the cluster. The MePro is probably produced via leucine cyclization and may originate from a separate pathway, independent of the cluster. Another nonproteinogenic amino acid, beta-Ala, could be produced by an aspartic acid decarboxylase also localized outside of the cluster. Two candidates are VFPBJ_01400 and VFPBJ_10476. The final peptide scaffold may be released by the NAD(P)H-dependent thioester reductase (TE) at the C-terminal region of lcsA. Transamination of the lcsA product by the transaminase lcsP may produce DPD at the C-terminus. Further hydroxylation steps performed alternatively by the cytochrome P450 monooxygenases lcsI, lcsK andr lcsN then yield the non-methylated leucinostatins precursor. It is also possible that leucines can be hydroxylated prior to their incorporation into the peptide. Varying extents of methylation then lead to the formation of leucinostatins A and B. This chain is Highly reducing polyketide synthase lcsB, found in Purpureocillium lilacinum (Paecilomyces lilacinus).